We begin with the raw amino-acid sequence, 198 residues long: UPF0548 protein DR_2035 (198 aa).

Belongs to the UPF0548 family.

The polypeptide is UPF0548 protein DR_2035 (Deinococcus radiodurans (strain ATCC 13939 / DSM 20539 / JCM 16871 / CCUG 27074 / LMG 4051 / NBRC 15346 / NCIMB 9279 / VKM B-1422 / R1)).